The chain runs to 180 residues: ATP-dependent protease subunit HslV (180 aa).

The active site involves Thr9. Na(+) contacts are provided by Ala164, Cys167, and Thr170.

Belongs to the peptidase T1B family. HslV subfamily. As to quaternary structure, a double ring-shaped homohexamer of HslV is capped on each side by a ring-shaped HslU homohexamer. The assembly of the HslU/HslV complex is dependent on binding of ATP.

It localises to the cytoplasm. The enzyme catalyses ATP-dependent cleavage of peptide bonds with broad specificity.. Its activity is regulated as follows. Allosterically activated by HslU binding. Its function is as follows. Protease subunit of a proteasome-like degradation complex believed to be a general protein degrading machinery. The protein is ATP-dependent protease subunit HslV of Leptospira interrogans serogroup Icterohaemorrhagiae serovar Lai (strain 56601).